We begin with the raw amino-acid sequence, 328 residues long: Fe(3+) ions import ATP-binding protein FbpC 1 (328 aa).

Residues 7–237 form the ABC transporter domain; the sequence is LVLKNITKAF…PNSLFLANFM (231 aa). 39–46 lines the ATP pocket; the sequence is GPSGCGKT.

Belongs to the ABC transporter superfamily. Fe(3+) ion importer (TC 3.A.1.10) family. In terms of assembly, the complex is composed of two ATP-binding proteins (FbpC), two transmembrane proteins (FbpB) and a solute-binding protein (FbpA).

The protein localises to the cell inner membrane. The enzyme catalyses Fe(3+)(out) + ATP + H2O = Fe(3+)(in) + ADP + phosphate + H(+). Its function is as follows. Part of the ABC transporter complex FbpABC involved in Fe(3+) ions import. Responsible for energy coupling to the transport system. This is Fe(3+) ions import ATP-binding protein FbpC 1 from Haemophilus influenzae (strain ATCC 51907 / DSM 11121 / KW20 / Rd).